Consider the following 124-residue polypeptide: Large ribosomal subunit protein bL21 (124 aa).

This sequence belongs to the bacterial ribosomal protein bL21 family. Part of the 50S ribosomal subunit. Contacts protein L20.

This protein binds to 23S rRNA in the presence of protein L20. This is Large ribosomal subunit protein bL21 from Sinorhizobium medicae (strain WSM419) (Ensifer medicae).